We begin with the raw amino-acid sequence, 242 residues long: Caffeoyl-CoA O-methyltransferase 3 (242 aa).

Lysine 16 contacts substrate. S-adenosyl-L-methionine-binding positions include threonine 58, glutamate 80, 82-83, serine 88, aspartate 106, and alanine 135; that span reads GV. Residue aspartate 158 participates in substrate binding. An a divalent metal cation-binding site is contributed by aspartate 158. S-adenosyl-L-methionine is bound at residue aspartate 160. Positions 184 and 185 each coordinate a divalent metal cation. Position 189 (asparagine 189) interacts with substrate.

Belongs to the class I-like SAM-binding methyltransferase superfamily. Cation-dependent O-methyltransferase family. CCoAMT subfamily. The cofactor is Mg(2+). In terms of tissue distribution, mostly expressed in the bottom and middle parts of the stems.

It carries out the reaction (E)-caffeoyl-CoA + S-adenosyl-L-methionine = (E)-feruloyl-CoA + S-adenosyl-L-homocysteine + H(+). The protein operates within aromatic compound metabolism; phenylpropanoid biosynthesis. Functionally, methylates caffeoyl-CoA to feruloyl-CoA and 5-hydroxyferuloyl-CoA to sinapoyl-CoA. Plays a role in the synthesis of feruloylated polysaccharides. Involved in the reinforcement of the plant cell wall. Also involved in the responding to wounding or pathogen challenge by the increased formation of cell wall-bound ferulic acid polymers. Also methylates free caffeic and 5-hydroxyferulic acids. The polypeptide is Caffeoyl-CoA O-methyltransferase 3 (CCOAOMT3) (Nicotiana tabacum (Common tobacco)).